The primary structure comprises 301 residues: Porphobilinogen deaminase (301 aa).

S-(dipyrrolylmethanemethyl)cysteine is present on cysteine 242.

Belongs to the HMBS family. Monomer. Dipyrromethane is required as a cofactor.

The catalysed reaction is 4 porphobilinogen + H2O = hydroxymethylbilane + 4 NH4(+). It participates in porphyrin-containing compound metabolism; protoporphyrin-IX biosynthesis; coproporphyrinogen-III from 5-aminolevulinate: step 2/4. Tetrapolymerization of the monopyrrole PBG into the hydroxymethylbilane pre-uroporphyrinogen in several discrete steps. The chain is Porphobilinogen deaminase from Rickettsia akari (strain Hartford).